We begin with the raw amino-acid sequence, 910 residues long: DNA mismatch repair protein MutS (910 aa).

658–665 serves as a coordination point for ATP; that stretch reads GPNMGGKS.

This sequence belongs to the DNA mismatch repair MutS family.

This protein is involved in the repair of mismatches in DNA. It is possible that it carries out the mismatch recognition step. This protein has a weak ATPase activity. This chain is DNA mismatch repair protein MutS, found in Brucella anthropi (strain ATCC 49188 / DSM 6882 / CCUG 24695 / JCM 21032 / LMG 3331 / NBRC 15819 / NCTC 12168 / Alc 37) (Ochrobactrum anthropi).